The sequence spans 77 residues: Large ribosomal subunit protein bL28 (77 aa).

The tract at residues 1–25 (MARVCQVTGKAPMSGNNVSHANNKT) is disordered.

Belongs to the bacterial ribosomal protein bL28 family.

The sequence is that of Large ribosomal subunit protein bL28 from Paraburkholderia phymatum (strain DSM 17167 / CIP 108236 / LMG 21445 / STM815) (Burkholderia phymatum).